The sequence spans 706 residues: DNA ligase (706 aa).

NAD(+) contacts are provided by residues aspartate 48–aspartate 52, serine 97–leucine 98, and glutamate 131. Lysine 133 serves as the catalytic N6-AMP-lysine intermediate. NAD(+) contacts are provided by arginine 154, glutamate 191, lysine 307, and lysine 331. Residues cysteine 425, cysteine 428, cysteine 443, and cysteine 449 each coordinate Zn(2+). Residues arginine 628–glycine 706 form the BRCT domain.

Belongs to the NAD-dependent DNA ligase family. LigA subfamily. Mg(2+) serves as cofactor. Mn(2+) is required as a cofactor.

It carries out the reaction NAD(+) + (deoxyribonucleotide)n-3'-hydroxyl + 5'-phospho-(deoxyribonucleotide)m = (deoxyribonucleotide)n+m + AMP + beta-nicotinamide D-nucleotide.. Its function is as follows. DNA ligase that catalyzes the formation of phosphodiester linkages between 5'-phosphoryl and 3'-hydroxyl groups in double-stranded DNA using NAD as a coenzyme and as the energy source for the reaction. It is essential for DNA replication and repair of damaged DNA. In Afipia carboxidovorans (strain ATCC 49405 / DSM 1227 / KCTC 32145 / OM5) (Oligotropha carboxidovorans), this protein is DNA ligase.